Reading from the N-terminus, the 227-residue chain is Cytochrome c oxidase subunit 2 (227 aa).

Residues 1 to 14 lie on the Mitochondrial intermembrane side of the membrane; it reads MAYPMQLGLQDATS. Residues 15–45 traverse the membrane as a helical segment; it reads PIMEELTDFHDHTLMIVFLISTLVLYIISMM. Residues 46–59 are Mitochondrial matrix-facing; the sequence is LTTKLTHTSTMDAQ. A helical membrane pass occupies residues 60-87; the sequence is EVETIWTVLPAVILVMIALPSLRILYMM. Over 88 to 227 the chain is Mitochondrial intermembrane; sequence DEINDPYLTV…QFESWASSMT (140 aa). Residues H161, C196, E198, C200, H204, and M207 each coordinate Cu cation. Position 198 (E198) interacts with Mg(2+).

Belongs to the cytochrome c oxidase subunit 2 family. As to quaternary structure, component of the cytochrome c oxidase (complex IV, CIV), a multisubunit enzyme composed of 14 subunits. The complex is composed of a catalytic core of 3 subunits MT-CO1, MT-CO2 and MT-CO3, encoded in the mitochondrial DNA, and 11 supernumerary subunits COX4I, COX5A, COX5B, COX6A, COX6B, COX6C, COX7A, COX7B, COX7C, COX8 and NDUFA4, which are encoded in the nuclear genome. The complex exists as a monomer or a dimer and forms supercomplexes (SCs) in the inner mitochondrial membrane with NADH-ubiquinone oxidoreductase (complex I, CI) and ubiquinol-cytochrome c oxidoreductase (cytochrome b-c1 complex, complex III, CIII), resulting in different assemblies (supercomplex SCI(1)III(2)IV(1) and megacomplex MCI(2)III(2)IV(2)). Found in a complex with TMEM177, COA6, COX18, COX20, SCO1 and SCO2. Interacts with TMEM177 in a COX20-dependent manner. Interacts with COX20. Interacts with COX16. Cu cation serves as cofactor.

It is found in the mitochondrion inner membrane. It catalyses the reaction 4 Fe(II)-[cytochrome c] + O2 + 8 H(+)(in) = 4 Fe(III)-[cytochrome c] + 2 H2O + 4 H(+)(out). Its function is as follows. Component of the cytochrome c oxidase, the last enzyme in the mitochondrial electron transport chain which drives oxidative phosphorylation. The respiratory chain contains 3 multisubunit complexes succinate dehydrogenase (complex II, CII), ubiquinol-cytochrome c oxidoreductase (cytochrome b-c1 complex, complex III, CIII) and cytochrome c oxidase (complex IV, CIV), that cooperate to transfer electrons derived from NADH and succinate to molecular oxygen, creating an electrochemical gradient over the inner membrane that drives transmembrane transport and the ATP synthase. Cytochrome c oxidase is the component of the respiratory chain that catalyzes the reduction of oxygen to water. Electrons originating from reduced cytochrome c in the intermembrane space (IMS) are transferred via the dinuclear copper A center (CU(A)) of subunit 2 and heme A of subunit 1 to the active site in subunit 1, a binuclear center (BNC) formed by heme A3 and copper B (CU(B)). The BNC reduces molecular oxygen to 2 water molecules using 4 electrons from cytochrome c in the IMS and 4 protons from the mitochondrial matrix. In Cratogeomys bursarius (Plains pocket gopher), this protein is Cytochrome c oxidase subunit 2 (MT-CO2).